The chain runs to 101 residues: Interleukin-8 (101 aa).

Positions 1–22 are cleaved as a signal peptide; it reads MTSKLAVALLAAFVLSAALCEA. Arg-27 carries the citrulline modification. 2 cysteine pairs are disulfide-bonded: Cys-34-Cys-61 and Cys-36-Cys-77.

Belongs to the intercrine alpha (chemokine CxC) family. Homodimer. Interacts with TNFAIP6 (via Link domain); this interaction interferes with chemokine binding to glycosaminoglycans. Post-translationally, citrullination at Arg-27 prevents proteolysis, and dampens tissue inflammation, it also enhances leukocytosis, possibly through impaired chemokine clearance from the blood circulation.

The protein resides in the secreted. Functionally, chemotactic factor that mediates inflammatory response by attracting neutrophils, basophils, and T-cells to clear pathogens and protect the host from infection. Also plays an important role in neutrophil activation. Released in response to an inflammatory stimulus, exerts its effect by binding to the G-protein-coupled receptors CXCR1 and CXCR2, primarily found in neutrophils, monocytes and endothelial cells. G-protein heterotrimer (alpha, beta, gamma subunits) constitutively binds to CXCR1/CXCR2 receptor and activation by IL8 leads to beta and gamma subunits release from Galpha (GNAI2 in neutrophils) and activation of several downstream signaling pathways including PI3K and MAPK pathways. The protein is Interleukin-8 (CXCL8) of Canis lupus familiaris (Dog).